Here is a 901-residue protein sequence, read N- to C-terminus: MALSMKPFRADDSGFQSNNLWVGSLTPETTESDLTELFGRYGDIDRITVYSSRGFAFIYYRHVEEAVAAKEALQGANLNGSQIKIEYARPAKPCKSLWVGGIGPNVSKDDLEEEFSKFGKIEDFRFLRERKTAFIDYYEMDDALQAKSMNGKPMGGSFLRVDFLRSQAPKKEQWAGSYDNRNGNMNHKPQYPHSYEDFKGDVQPSKVLWIGFPPTATQCNDEQILHNAMILFGEIERVKSYPSRNFALVEFRSAEEARQCKEGLQGRLFNNPRIKIMYSNDELPPEQDDTSFYSGMKRSRTDMFNNDPSFVSSPHSTGIPGSMRPLRGTNERSYNGAEYNDVVGKEPNWRRPSANGTGILPSPTGPGILPSPAQGTRRPMRSNPDSWEGYDPAQLVRESKRTRRDGSVDGFTPMGVDERSFGRGSVAARPIRGPPDSDHIWRGMIAKGGTPVCCARCVPMGKGIETKLPEVVNCSARTDLNMLAKHYAVAIGCEIVFFVPDREEDFASYTEFLRYLSSKDRAGVAKLDDGTTLFLVPPSDFLTDVLQVTRQERLYGVVLKLPPPAVPVTASYRQESQSNPLHYMDQARDSPANASHSLYPPRENYIRGAPEHLTAASKPSVSEPLRIPNNAAPQAGVSLTPELLATLASILPATSQPAAPESHQPMSGPSTVVSTAHQSNGLYNGEAPSQAWKRGPQTVHDASNQSFQQYGNQYTPAGQLPPPPSRYPPASNNPNYTSGMVHGNMQYQSQSVNMPQLSPLPNMPHNNYSMYTQGSSNHPVSQPMVQQYQPEASMPNQNYGPIPSYQQANFHGVTTNQAQNLNPSQFQAAMQPPADKANLEPQNQALRLQPMISGDGQGTTDGEVDKNQRYQSTLQFAANLLLQIQQKQQQQSSGTPAGQGP.

3 consecutive RRM domains span residues 18-90 (NNLW…YARP), 95-166 (KSLW…FLRS), and 206-281 (KVLW…YSND). Residues 343–416 (VGKEPNWRRP…SVDGFTPMGV (74 aa)) form a disordered region. One can recognise an SPOC domain in the interval 441–537 (WRGMIAKGGT…DDGTTLFLVP (97 aa)). The interval 655–736 (SQPAAPESHQ…YPPASNNPNY (82 aa)) is disordered. Polar residues-rich tracts occupy residues 664 to 682 (QPMS…SNGL) and 700 to 716 (HDAS…QYTP).

This sequence belongs to the RRM Spen family. Expressed in roots, leaves, stems and flowers. Highest expression in flower stems and meristematic regions.

It is found in the nucleus. Functionally, plays a role in the regulation of flowering time in the autonomous flowering pathway by decreasing FLOWERING LOCUS C mRNA levels. Required for RNA-mediated chromatin silencing of a range of loci in the genome. Cotranscriptionally recognizes aberrant RNA and marks it for silencing. Controls alternative cleavage and polyadenylation on pre-mRNAs and antisense RNAs. Acts redundantly with FCA to prevent the expression of distally polyadenylated antisense RNAs at the FLC locus. In Arabidopsis thaliana (Mouse-ear cress), this protein is Flowering time control protein FPA (FPA).